Reading from the N-terminus, the 226-residue chain is Leucyl/phenylalanyl-tRNA--protein transferase (226 aa).

The protein belongs to the L/F-transferase family.

Its subcellular location is the cytoplasm. It carries out the reaction N-terminal L-lysyl-[protein] + L-leucyl-tRNA(Leu) = N-terminal L-leucyl-L-lysyl-[protein] + tRNA(Leu) + H(+). It catalyses the reaction N-terminal L-arginyl-[protein] + L-leucyl-tRNA(Leu) = N-terminal L-leucyl-L-arginyl-[protein] + tRNA(Leu) + H(+). The enzyme catalyses L-phenylalanyl-tRNA(Phe) + an N-terminal L-alpha-aminoacyl-[protein] = an N-terminal L-phenylalanyl-L-alpha-aminoacyl-[protein] + tRNA(Phe). Its function is as follows. Functions in the N-end rule pathway of protein degradation where it conjugates Leu, Phe and, less efficiently, Met from aminoacyl-tRNAs to the N-termini of proteins containing an N-terminal arginine or lysine. This Pseudomonas aeruginosa (strain UCBPP-PA14) protein is Leucyl/phenylalanyl-tRNA--protein transferase.